Consider the following 174-residue polypeptide: 5-hydroxymethyl-dUMP N-hydrolase (174 aa).

At Ala-2 the chain carries N-acetylalanine. 5-hydroxymethyl-dUMP is bound at residue Gly-27. Ser-28 bears the Phosphoserine mark. The 5-hydroxymethyl-dUMP site is built by Ile-29, Arg-30, Gly-31, Ser-98, Gly-100, and Glu-104. Position 98 is a phosphoserine (Ser-98). Phosphoserine is present on residues Ser-123, Ser-128, Ser-138, and Ser-169. Ser-128 contacts 5-hydroxymethyl-dUMP.

Belongs to the 2'-deoxynucleoside 5'-phosphate N-hydrolase 1 family. In terms of assembly, monomer and homodimer. Expressed at low levels in brain, colon, lung, peripheral blood leukocytes, placenta, small intestine, and thymus. Expressed at high levels in heart, kidney, liver, skeletal muscle and spleen. Overexpressed in a significant proportion of breast cancers.

Its subcellular location is the cytoplasm. The protein resides in the nucleus. It catalyses the reaction 5-hydroxymethyl-dUMP + H2O = 5-hydroxymethyluracil + 2-deoxy-D-ribose 5-phosphate. Its activity is regulated as follows. Inhibited by AMP and GMP. In terms of biological role, part of a nucleotide salvage pathway that eliminates epigenetically modified 5-hydroxymethyl-dCMP (hmdCMP) in a two-step process entailing deamination to cytotoxic 5-hydroxymethyl-dUMP (hmdUMP), followed by its hydrolysis into 5-hydroxymethyluracil (hmU) and 2-deoxy-D-ribose 5-phosphate (deoxyribosephosphate). Catalyzes the second step in that pathway, the hydrolysis of the N-glycosidic bond in hmdUMP, degrading this cytotoxic nucleotide to avoid its genomic integration. The chain is 5-hydroxymethyl-dUMP N-hydrolase from Homo sapiens (Human).